Consider the following 1414-residue polypeptide: DNA-directed RNA polymerase subunit beta' (1414 aa).

Zn(2+) contacts are provided by C70, C72, C85, and C88. The Mg(2+) site is built by D460, D462, and D464. Zn(2+) contacts are provided by C815, C889, C896, and C899. The tract at residues 1395-1414 (EAEAQFADVSSTPDSDTDAS) is disordered.

Belongs to the RNA polymerase beta' chain family. In terms of assembly, the RNAP catalytic core consists of 2 alpha, 1 beta, 1 beta' and 1 omega subunit. When a sigma factor is associated with the core the holoenzyme is formed, which can initiate transcription. Requires Mg(2+) as cofactor. It depends on Zn(2+) as a cofactor.

The enzyme catalyses RNA(n) + a ribonucleoside 5'-triphosphate = RNA(n+1) + diphosphate. Functionally, DNA-dependent RNA polymerase catalyzes the transcription of DNA into RNA using the four ribonucleoside triphosphates as substrates. The sequence is that of DNA-directed RNA polymerase subunit beta' from Janthinobacterium sp. (strain Marseille) (Minibacterium massiliensis).